The chain runs to 130 residues: Arsenical-resistance protein 2 (130 aa).

One can recognise a Rhodanese domain in the interval 17 to 124; it reads QRKDFQVVDL…WETHCRESNL (108 aa).

Functionally, involved in resistance to arsenic compounds. The polypeptide is Arsenical-resistance protein 2 (ARR2) (Saccharomyces cerevisiae (strain ATCC 204508 / S288c) (Baker's yeast)).